Consider the following 70-residue polypeptide: Large ribosomal subunit protein bL31 (70 aa).

Residues Cys16, Cys18, Cys37, and Cys40 each coordinate Zn(2+).

The protein belongs to the bacterial ribosomal protein bL31 family. Type A subfamily. In terms of assembly, part of the 50S ribosomal subunit. Zn(2+) is required as a cofactor.

Binds the 23S rRNA. The sequence is that of Large ribosomal subunit protein bL31 from Salmonella agona (strain SL483).